The chain runs to 468 residues: uncharacterized protein (468 aa).

The signal sequence occupies residues 1 to 19 (MRVLSVLLVALTVAGSAYS). N-linked (GlcNAc...) asparagine glycans are attached at residues N86 and N334. A disordered region spans residues 401 to 421 (NPSTNLPETSPPTEQPTAPPA). Over residues 409-421 (TSPPTEQPTAPPA) the composition is skewed to pro residues. N435 is a glycosylation site (N-linked (GlcNAc...) asparagine). The GPI-like-anchor amidated asparagine moiety is linked to residue N444. A propeptide spans 445–468 (SASSIEMSKLVVAILSLFILAFFH) (removed in mature form).

It localises to the cell membrane. This is an uncharacterized protein from Dictyostelium discoideum (Social amoeba).